The chain runs to 530 residues: MLGTDRCVVEEWLSEFKALPDTQITSYAATLHRKKTLVPALYKVIQDSNNELLEPVCHQLFELYRSSEVRLKRFTLQFLPELMWVYLRLTVSRDRQSNGCIEALLLGIYNLEIADKDGNNKVLSFTIPSLSKPSIYHEPSTIGSMALTEGALCQHDLIRVVYSDLHPQRETFTAQNRFEVLSFLMLCYNSAIVYMPASSYQSLCRMGSRVCVSGFPRQHEKHWKELCGRIVLDPEFMVQLLTGVYYAMYNGQWDLGQEVLDDIIYRAQLELFSQPLLVANAMKNSLPFDAPDSTQEGQKVLKVEVTPTVPRISRTAITTASIRRHRWRREGAEGVNGGEESVNLNDADEGFSSGASLSSQPIGTKPSSSSQRGSLRKVATGRSAKDKETASAIKSSESPRDSVVRKQYVQQPTDLSVDSVELTPMKKHLSLPAGQVVPKINSLSLIRTASASSSKSFDYVNGSQASTSIGVGTEGGTNLAANNANRYSTVSLQEDRLGQAGEGKELLSPGAPLTKQSRSPSFNMQLISQV.

Residues Thr30 and Thr306 each carry the phosphothreonine modification. Ser321 and Ser341 each carry phosphoserine. Residues 328–410 form a disordered region; it reads RREGAEGVNG…DSVVRKQYVQ (83 aa). Polar residues predominate over residues 353–373; sequence SGASLSSQPIGTKPSSSSQRG. Phosphoserine is present on residues Ser430, Ser442, Ser444, and Ser491. Residues 502–530 are disordered; the sequence is EGKELLSPGAPLTKQSRSPSFNMQLISQV. Polar residues predominate over residues 514–530; it reads TKQSRSPSFNMQLISQV.

The protein belongs to the Hyccin family. As to quaternary structure, component of a phosphatidylinositol 4-kinase (PI4K) complex, composed of PI4KA, EFR3 (EFR3A or EFR3B), TTC7 (TTC7A or TTC7B) and HYCC (HYCC1 or HYCC2).

The protein resides in the cytoplasm. The protein localises to the cytosol. It is found in the cell membrane. Its function is as follows. Component of a complex required to localize phosphatidylinositol 4-kinase (PI4K) to the plasma membrane. This is Hyccin 2 from Homo sapiens (Human).